The chain runs to 86 residues: Protein YwqI (86 aa).

The stretch at 57-83 (DYKKAVQKNIEDTKDNVDSLKEQDEAI) forms a coiled coil.

This is Protein YwqI (ywqI) from Bacillus subtilis (strain 168).